Reading from the N-terminus, the 222-residue chain is Pyridoxine/pyridoxamine 5'-phosphate oxidase (222 aa).

Residues 16-19 (RVSY) and lysine 75 each bind substrate. FMN contacts are provided by residues 70–75 (RTVLCK), 85–86 (FT), lysine 92, and glutamine 114. 3 residues coordinate substrate: tyrosine 132, arginine 136, and serine 140. FMN contacts are provided by residues 149–150 (QS) and tryptophan 195. 201 to 203 (RLH) provides a ligand contact to substrate. Residue arginine 205 coordinates FMN.

This sequence belongs to the pyridoxamine 5'-phosphate oxidase family. In terms of assembly, homodimer. FMN serves as cofactor.

It catalyses the reaction pyridoxamine 5'-phosphate + O2 + H2O = pyridoxal 5'-phosphate + H2O2 + NH4(+). It carries out the reaction pyridoxine 5'-phosphate + O2 = pyridoxal 5'-phosphate + H2O2. Its pathway is cofactor metabolism; pyridoxal 5'-phosphate salvage; pyridoxal 5'-phosphate from pyridoxamine 5'-phosphate: step 1/1. It functions in the pathway cofactor metabolism; pyridoxal 5'-phosphate salvage; pyridoxal 5'-phosphate from pyridoxine 5'-phosphate: step 1/1. Functionally, catalyzes the oxidation of either pyridoxine 5'-phosphate (PNP) or pyridoxamine 5'-phosphate (PMP) into pyridoxal 5'-phosphate (PLP). This Saccharopolyspora erythraea (strain ATCC 11635 / DSM 40517 / JCM 4748 / NBRC 13426 / NCIMB 8594 / NRRL 2338) protein is Pyridoxine/pyridoxamine 5'-phosphate oxidase.